The following is a 70-amino-acid chain: Small, acid-soluble spore protein 1 (70 aa).

The protein belongs to the alpha/beta-type SASP family.

Functionally, SASP are bound to spore DNA. They are double-stranded DNA-binding proteins that cause DNA to change to an a-like conformation. They protect the DNA backbone from chemical and enzymatic cleavage and are thus involved in dormant spore's high resistance to UV light. In Geobacillus stearothermophilus (Bacillus stearothermophilus), this protein is Small, acid-soluble spore protein 1 (sasP-1).